Consider the following 347-residue polypeptide: uncharacterized protein (347 aa).

A signal peptide spans Met1–Ala21.

This is an uncharacterized protein from Escherichia coli (strain K12).